Here is a 172-residue protein sequence, read N- to C-terminus: Ribosome maturation factor RimM (172 aa).

One can recognise a PRC barrel domain in the interval 97–170 (DDEYYYDEII…LITIDVLEGL (74 aa)).

The protein belongs to the RimM family. As to quaternary structure, binds ribosomal protein uS19.

It is found in the cytoplasm. Functionally, an accessory protein needed during the final step in the assembly of 30S ribosomal subunit, possibly for assembly of the head region. Essential for efficient processing of 16S rRNA. May be needed both before and after RbfA during the maturation of 16S rRNA. It has affinity for free ribosomal 30S subunits but not for 70S ribosomes. In Leuconostoc citreum (strain KM20), this protein is Ribosome maturation factor RimM.